The sequence spans 308 residues: Protein translocase subunit SecF (308 aa).

The next 6 helical transmembrane spans lie at 10–30, 129–149, 160–180, 181–201, 241–261, and 264–284; these read LFFA…AIFG, LAVS…FRGV, IIAM…GGVL, FGWQ…GFSV, TQLM…GITL, and FAII…FIAA.

It belongs to the SecD/SecF family. SecF subfamily. Forms a complex with SecD. Part of the essential Sec protein translocation apparatus which comprises SecA, SecYEG and auxiliary proteins SecDF. Other proteins may also be involved.

It is found in the cell membrane. Part of the Sec protein translocase complex. Interacts with the SecYEG preprotein conducting channel. SecDF uses the proton motive force (PMF) to complete protein translocation after the ATP-dependent function of SecA. This is Protein translocase subunit SecF from Anaerolinea thermophila (strain DSM 14523 / JCM 11388 / NBRC 100420 / UNI-1).